The primary structure comprises 61 residues: Small ribosomal subunit protein uS14 (61 aa).

Zn(2+) is bound by residues Cys24, Cys27, Cys40, and Cys43.

The protein belongs to the universal ribosomal protein uS14 family. Zinc-binding uS14 subfamily. Part of the 30S ribosomal subunit. Contacts proteins S3 and S10. The cofactor is Zn(2+).

In terms of biological role, binds 16S rRNA, required for the assembly of 30S particles and may also be responsible for determining the conformation of the 16S rRNA at the A site. In Kosmotoga olearia (strain ATCC BAA-1733 / DSM 21960 / TBF 19.5.1), this protein is Small ribosomal subunit protein uS14.